The primary structure comprises 160 residues: Cytochrome b6-f complex subunit 4 (160 aa).

The next 3 membrane-spanning stretches (helical) occupy residues 36-56 (LLYV…ALAV), 95-115 (LLGV…PFIE), and 131-151 (TVFL…ALPL).

The protein belongs to the cytochrome b family. PetD subfamily. In terms of assembly, the 4 large subunits of the cytochrome b6-f complex are cytochrome b6, subunit IV (17 kDa polypeptide, PetD), cytochrome f and the Rieske protein, while the 4 small subunits are PetG, PetL, PetM and PetN. The complex functions as a dimer.

The protein localises to the cellular thylakoid membrane. Functionally, component of the cytochrome b6-f complex, which mediates electron transfer between photosystem II (PSII) and photosystem I (PSI), cyclic electron flow around PSI, and state transitions. The protein is Cytochrome b6-f complex subunit 4 of Trichormus variabilis (strain ATCC 29413 / PCC 7937) (Anabaena variabilis).